Consider the following 256-residue polypeptide: ATP synthase subunit a (256 aa).

Helical transmembrane passes span 33–53 (ITTF…LTLL), 92–112 (YFPL…IGMI), 122–142 (MVFI…IGLY), 148–168 (FFAL…LVLI), 191–211 (GHLL…VSIV), and 235–255 (MIQS…GLYL).

It belongs to the ATPase A chain family. F-type ATPases have 2 components, CF(1) - the catalytic core - and CF(0) - the membrane proton channel. CF(1) has five subunits: alpha(3), beta(3), gamma(1), delta(1), epsilon(1). CF(0) has three main subunits: a, b and c.

The protein resides in the mitochondrion inner membrane. In terms of biological role, mitochondrial membrane ATP synthase (F(1)F(0) ATP synthase or Complex V) produces ATP from ADP in the presence of a proton gradient across the membrane which is generated by electron transport complexes of the respiratory chain. F-type ATPases consist of two structural domains, F(1) - containing the extramembraneous catalytic core and F(0) - containing the membrane proton channel, linked together by a central stalk and a peripheral stalk. During catalysis, ATP synthesis in the catalytic domain of F(1) is coupled via a rotary mechanism of the central stalk subunits to proton translocation. Key component of the proton channel; it may play a direct role in the translocation of protons across the membrane. This chain is ATP synthase subunit a (ATP6), found in Wickerhamomyces canadensis (Yeast).